Reading from the N-terminus, the 206-residue chain is Cytidylate kinase (206 aa).

7-15 (GPAASGKGT) contributes to the ATP binding site.

The protein belongs to the cytidylate kinase family. Type 1 subfamily.

The protein resides in the cytoplasm. It catalyses the reaction CMP + ATP = CDP + ADP. The enzyme catalyses dCMP + ATP = dCDP + ADP. This Azorhizobium caulinodans (strain ATCC 43989 / DSM 5975 / JCM 20966 / LMG 6465 / NBRC 14845 / NCIMB 13405 / ORS 571) protein is Cytidylate kinase.